We begin with the raw amino-acid sequence, 351 residues long: Palmitoyltransferase spe-10 (351 aa).

4 consecutive transmembrane segments (helical) span residues 21–43 (TGWI…LWWS), 60–80 (IQAT…MWSL), 198–218 (YFLL…LTSL), and 241–261 (LFSF…LIIF). In terms of domain architecture, DHHC spans 154-204 (KYCYECGHIKPDRARHCSSCGKCCIKYDHHCPWINMCVTHVNYKYFLLYII).

Belongs to the DHHC palmitoyltransferase family. As to expression, expressed during spermatogenesis in budding and budded spermatids.

It localises to the membrane. It carries out the reaction L-cysteinyl-[protein] + hexadecanoyl-CoA = S-hexadecanoyl-L-cysteinyl-[protein] + CoA. Involved in spermatogenesis, specifically in the morphogenesis of fibrous body-membranous organelles (FB-MO), which are Golgi-derived organelles used for transporting sperm-specific components, in spermatocytes and in their localization into budding spermatids. Required for the proper formation of spermatids and spermatozoa. This chain is Palmitoyltransferase spe-10, found in Caenorhabditis elegans.